Consider the following 555-residue polypeptide: Membrane protein insertase YidC (555 aa).

The next 5 membrane-spanning stretches (helical) occupy residues 7 to 24 (VLWVIFFMSAVMLYDNWQ), 367 to 387 (WGWSIVLLTLLIKAVFFPLSA), 437 to 457 (LPVVIQIPVFISLYWVLLASV), 476 to 496 (PFFILPVLMAVSMYVQTSLNP), and 511 to 531 (PIAFSVMFFFFPAGLVLYYVV).

It belongs to the OXA1/ALB3/YidC family. Type 1 subfamily. As to quaternary structure, interacts with the Sec translocase complex via SecD. Specifically interacts with transmembrane segments of nascent integral membrane proteins during membrane integration.

Its subcellular location is the cell inner membrane. Its function is as follows. Required for the insertion and/or proper folding and/or complex formation of integral membrane proteins into the membrane. Involved in integration of membrane proteins that insert both dependently and independently of the Sec translocase complex, as well as at least some lipoproteins. Aids folding of multispanning membrane proteins. The polypeptide is Membrane protein insertase YidC (Burkholderia lata (strain ATCC 17760 / DSM 23089 / LMG 22485 / NCIMB 9086 / R18194 / 383)).